Consider the following 139-residue polypeptide: Large ribosomal subunit protein uL16 (139 aa).

A compositionally biased stretch (basic residues) spans 1–19 (MLIPRRVKHRKQHHPKRSG). Residues 1-25 (MLIPRRVKHRKQHHPKRSGMSKGGT) form a disordered region.

Belongs to the universal ribosomal protein uL16 family. As to quaternary structure, part of the 50S ribosomal subunit.

Its function is as follows. Binds 23S rRNA and is also seen to make contacts with the A and possibly P site tRNAs. The chain is Large ribosomal subunit protein uL16 from Streptomyces griseus subsp. griseus (strain JCM 4626 / CBS 651.72 / NBRC 13350 / KCC S-0626 / ISP 5235).